We begin with the raw amino-acid sequence, 414 residues long: ORC1-type DNA replication protein 1 (414 aa).

ATP-binding positions include 70–74 (TGKTA), Tyr-213, and Arg-225.

It belongs to the CDC6/cdc18 family.

Involved in regulation of DNA replication. The sequence is that of ORC1-type DNA replication protein 1 (cdc6-1) from Methanosarcina mazei (strain ATCC BAA-159 / DSM 3647 / Goe1 / Go1 / JCM 11833 / OCM 88) (Methanosarcina frisia).